Here is a 355-residue protein sequence, read N- to C-terminus: Peptide chain release factor 1 (355 aa).

Q233 is modified (N5-methylglutamine).

The protein belongs to the prokaryotic/mitochondrial release factor family. Post-translationally, methylated by PrmC. Methylation increases the termination efficiency of RF1.

The protein localises to the cytoplasm. Its function is as follows. Peptide chain release factor 1 directs the termination of translation in response to the peptide chain termination codons UAG and UAA. This Syntrophomonas wolfei subsp. wolfei (strain DSM 2245B / Goettingen) protein is Peptide chain release factor 1.